Here is a 146-residue protein sequence, read N- to C-terminus: Large ribosomal subunit protein uL13 (146 aa).

The protein belongs to the universal ribosomal protein uL13 family. In terms of assembly, part of the 50S ribosomal subunit.

Its function is as follows. This protein is one of the early assembly proteins of the 50S ribosomal subunit, although it is not seen to bind rRNA by itself. It is important during the early stages of 50S assembly. The chain is Large ribosomal subunit protein uL13 from Mycoplasma pneumoniae (strain ATCC 29342 / M129 / Subtype 1) (Mycoplasmoides pneumoniae).